The chain runs to 146 residues: Ribosome maturation factor RimP (146 aa).

The protein belongs to the RimP family.

Its subcellular location is the cytoplasm. Its function is as follows. Required for maturation of 30S ribosomal subunits. The chain is Ribosome maturation factor RimP from Helicobacter pylori (strain Shi470).